Here is a 159-residue protein sequence, read N- to C-terminus: Xanthine dehydrogenase iron-sulfur-binding subunit (159 aa).

The 2Fe-2S ferredoxin-type domain maps to 7-82 (ITIECTINGM…GKEIRTLEGE (76 aa)). [2Fe-2S] cluster-binding residues include cysteine 44, cysteine 49, and cysteine 52.

Heterotrimer of XdhA, XdhB and XdhC. Requires [2Fe-2S] cluster as cofactor.

It participates in purine metabolism; hypoxanthine degradation; urate from hypoxanthine: step 1/2. Iron-sulfur subunit of the xanthine dehydrogenase complex. This is Xanthine dehydrogenase iron-sulfur-binding subunit (xdhC) from Escherichia coli O157:H7.